Reading from the N-terminus, the 533-residue chain is Protein mono-ADP-ribosyltransferase PARP3 (533 aa).

Residues 1-30 are disordered; it reads MAPKRKASVQTEGSKKRRQGTEEEDSFRST. At K6 the chain carries N6-(ADP-ribosyl)lysine. E12 bears the ADP-ribosyl glutamic acid mark. The Nuclear localization signal motif lies at 14 to 18; it reads SKKRR. An ADP-ribosyl glutamic acid mark is found at E24 and E32. The WGR domain maps to 57–147; it reads GIQVHEDYDC…DRFVAQPNKY (91 aa). D138 carries the post-translational modification ADP-ribosyl aspartic acid. E160, E230, E309, and E310 each carry ADP-ribosyl glutamic acid. The region spanning 181–299 is the PARP alpha-helical domain; the sequence is PCSLDPATQN…DIELAQTLQA (119 aa). The region spanning 313–533 is the PARP catalytic domain; sequence HPLDRDYQLL…RLRYLLEIHL (221 aa).

Belongs to the ARTD/PARP family. Interacts with PARP1; leading to activate PARP1 in absence of DNA. Interacts with PRKDC. Interacts with XRCC5/Ku80; the interaction is dependent on nucleic acids. Interacts with XRCC6/Ku70; the interaction is dependent on nucleic acids. Interacts with EZH2, HDAC1, HDAC2, SUZ12, YY1, LRIG3 and LIG4. In terms of processing, auto-ADP-ribosylated.

It localises to the nucleus. Its subcellular location is the chromosome. The protein resides in the cytoplasm. It is found in the cytoskeleton. The protein localises to the microtubule organizing center. It localises to the centrosome. Its subcellular location is the centriole. It catalyses the reaction L-aspartyl-[protein] + NAD(+) = 4-O-(ADP-D-ribosyl)-L-aspartyl-[protein] + nicotinamide. The catalysed reaction is L-glutamyl-[protein] + NAD(+) = 5-O-(ADP-D-ribosyl)-L-glutamyl-[protein] + nicotinamide. The enzyme catalyses L-lysyl-[protein] + NAD(+) = N(6)-(ADP-D-ribosyl)-L-lysyl-[protein] + nicotinamide + H(+). In terms of biological role, mono-ADP-ribosyltransferase that mediates mono-ADP-ribosylation of target proteins and plays a key role in the response to DNA damage. Mediates mono-ADP-ribosylation of glutamate, aspartate or lysine residues on target proteins. In contrast to PARP1 and PARP2, it is not able to mediate poly-ADP-ribosylation. Involved in DNA repair by mediating mono-ADP-ribosylation of a limited number of acceptor proteins involved in chromatin architecture and in DNA metabolism, such as histone H2B, XRCC5 and XRCC6. ADP-ribosylation follows DNA damage and appears as an obligatory step in a detection/signaling pathway leading to the reparation of DNA strand breaks. Involved in single-strand break repair by catalyzing mono-ADP-ribosylation of histone H2B on 'Glu-2' (H2BE2ADPr) of nucleosomes containing nicked DNA. Cooperates with the XRCC5-XRCC6 (Ku80-Ku70) heterodimer to limit end-resection thereby promoting accurate NHEJ. Suppresses G-quadruplex (G4) structures in response to DNA damage. Associates with a number of DNA repair factors and is involved in the response to exogenous and endogenous DNA strand breaks. Together with APLF, promotes the retention of the LIG4-XRCC4 complex on chromatin and accelerate DNA ligation during non-homologous end-joining (NHEJ). May link the DNA damage surveillance network to the mitotic fidelity checkpoint. Acts as a negative regulator of immunoglobulin class switch recombination, probably by controlling the level of AICDA /AID on the chromatin. In addition to proteins, also able to ADP-ribosylate DNA: mediates DNA mono-ADP-ribosylation of DNA strand break termini via covalent addition of a single ADP-ribose moiety to a 5'- or 3'-terminal phosphate residues in DNA containing multiple strand breaks. The chain is Protein mono-ADP-ribosyltransferase PARP3 from Mus musculus (Mouse).